Consider the following 290-residue polypeptide: Appressoria-specific virulence factor GAS2 (290 aa).

An N-terminal signal peptide occupies residues 1-19; the sequence is MKYTSAILISAFAATNVFA. Asn-99 carries N-linked (GlcNAc...) asparagine glycosylation. Residues 121–140 are disordered; it reads LPRAGGGTSTPKGTEETGVK.

Its subcellular location is the cytoplasm. In terms of biological role, appressoria-specific virulence factor required for appressorial penetration in host and lesion development. In Pyricularia oryzae (strain 70-15 / ATCC MYA-4617 / FGSC 8958) (Rice blast fungus), this protein is Appressoria-specific virulence factor GAS2.